The following is a 312-amino-acid chain: 4-diphosphocytidyl-2-C-methyl-D-erythritol kinase (312 aa).

Residue Lys16 is part of the active site. Residue 101–111 (PIGAGLAGGSS) coordinates ATP. The active site involves Asp143.

The protein belongs to the GHMP kinase family. IspE subfamily.

The catalysed reaction is 4-CDP-2-C-methyl-D-erythritol + ATP = 4-CDP-2-C-methyl-D-erythritol 2-phosphate + ADP + H(+). It participates in isoprenoid biosynthesis; isopentenyl diphosphate biosynthesis via DXP pathway; isopentenyl diphosphate from 1-deoxy-D-xylulose 5-phosphate: step 3/6. Functionally, catalyzes the phosphorylation of the position 2 hydroxy group of 4-diphosphocytidyl-2C-methyl-D-erythritol. This Prochlorococcus marinus (strain MIT 9515) protein is 4-diphosphocytidyl-2-C-methyl-D-erythritol kinase.